The sequence spans 75 residues: Tautomerase PptA (75 aa).

Proline 2 serves as the catalytic Proton acceptor; via imino nitrogen.

It belongs to the 4-oxalocrotonate tautomerase family. PptA subfamily. As to quaternary structure, homodimer.

The protein localises to the cytoplasm. In Klebsiella pneumoniae subsp. pneumoniae (strain ATCC 700721 / MGH 78578), this protein is Tautomerase PptA.